A 1747-amino-acid polypeptide reads, in one-letter code: E3 ubiquitin-protein ligase listerin (1747 aa).

Residues 1–24 are disordered; sequence MGGKTKQAPRTKNNAKPSSSSRTA. A compositionally biased stretch (polar residues) spans 8-24; it reads APRTKNNAKPSSSSRTA. HEAT repeat units lie at residues 65 to 102, 106 to 144, 346 to 383, 424 to 461, and 508 to 547; these read AAIS…QSDV, KNIL…KCKK, NIRK…KVTQ, NAYF…NVLE, and KFWI…ANPS. A Phosphoserine modification is found at S566. HEAT repeat units follow at residues 612 to 653, 664 to 711, 789 to 825, 952 to 989, 1005 to 1042, 1053 to 1090, 1129 to 1166, 1216 to 1258, 1269 to 1307, 1330 to 1363, 1364 to 1400, and 1500 to 1539; these read SRYI…LLGQ, EIVF…CAEA, SFIA…EHRP, LSRN…DPED, KWNE…ELVL, GNSS…FCPQ, KLSQ…NFEG, VEFI…SIAQ, VAVY…LFAK, FQAC…NSNI, TLDH…HFVA, and ENFL…QKDR. The segment at 1697-1744 adopts an RING-type zinc-finger fold; it reads CYVCYTVIHQETCQLPKLTCKTCKKKFHGPCLYKWFTTSSKSTCPICR.

Belongs to the LTN1 family. In terms of assembly, component of the ribosome quality control complex (RQC), composed of at least the E3 ubiquitin ligase l(3)76BDr/LTN1 and Clbn/NEMF. The complex probably also contains TCF25 as well as TER94/VCP and its ubiquitin-binding cofactors. RQC forms a stable complex with 60S ribosomal subunits.

Its subcellular location is the cytoplasm. It localises to the cytosol. The enzyme catalyses S-ubiquitinyl-[E2 ubiquitin-conjugating enzyme]-L-cysteine + [acceptor protein]-L-lysine = [E2 ubiquitin-conjugating enzyme]-L-cysteine + N(6)-ubiquitinyl-[acceptor protein]-L-lysine.. Its pathway is protein modification; protein ubiquitination. In terms of biological role, E3 ubiquitin-protein ligase component of the ribosome quality control complex (RQC), a ribosome-associated complex that mediates ubiquitination and extraction of incompletely synthesized nascent chains for proteasomal degradation. Ubiquitination leads to TER94/VCP recruitment for extraction and degradation of the incomplete translation product. In Drosophila melanogaster (Fruit fly), this protein is E3 ubiquitin-protein ligase listerin.